A 149-amino-acid chain; its full sequence is MNADKFVETTISDFMRLNSSRDFEYFVSIAKQLYSRGCRDYYTEAFLTHLKTIFPITEENAEKWLKYGEMLGTVGEKDFRTDIFEQMMKDFVDSNKLSQIAAKFHGFVESVDDWNLLAECLFSRVRALEHKINLTASAPMATDPSESSC.

This is an uncharacterized protein from Caenorhabditis elegans.